Reading from the N-terminus, the 479-residue chain is Sucrose-6-phosphate hydrolase (479 aa).

The disordered stretch occupies residues 1–28 (MTAHDQELRRRAYEEVEKKEPIANSDPH). Substrate contacts are provided by residues 40 to 43 (LLND), Q59, 102 to 103 (YS), 161 to 162 (RD), and E220. D43 is an active-site residue.

Belongs to the glycosyl hydrolase 32 family.

It catalyses the reaction Hydrolysis of terminal non-reducing beta-D-fructofuranoside residues in beta-D-fructofuranosides.. Its pathway is glycan biosynthesis; sucrose metabolism. This is Sucrose-6-phosphate hydrolase (sacA) from Bacillus subtilis (strain 168).